The chain runs to 85 residues: Small ribosomal subunit protein bS16c (85 aa).

This sequence belongs to the bacterial ribosomal protein bS16 family.

The protein resides in the plastid. Its subcellular location is the chloroplast. In Cucumis sativus (Cucumber), this protein is Small ribosomal subunit protein bS16c.